The following is a 474-amino-acid chain: 15-cis-phytoene desaturase (474 aa).

This sequence belongs to the carotenoid/retinoid oxidoreductase family.

Its subcellular location is the cell membrane. It carries out the reaction 2 a plastoquinone + 15-cis-phytoene = 9,9',15-tri-cis-zeta-carotene + 2 a plastoquinol. The protein operates within carotenoid biosynthesis; lycopene biosynthesis. Its activity is regulated as follows. Inhibited by the herbicide norflurazon in a non-competitive way. Its function is as follows. This enzyme converts phytoene into zeta-carotene via the intermediary of phytofluene by the symmetrical introduction of two double bonds at the C-11 and C-11' positions of phytoene. Also active with phytofluene and 1,2-epoxyphytoene as substrates. In Synechococcus elongatus (strain ATCC 33912 / PCC 7942 / FACHB-805) (Anacystis nidulans R2), this protein is 15-cis-phytoene desaturase (pds).